Consider the following 560-residue polypeptide: Terminal uridylyltransferase Tailor (560 aa).

The disordered stretch occupies residues 169 to 197 (EQHPKPNPNNQPVQPHPTHQTKQEKKQAQ). Residues 176 to 188 (PNNQPVQPHPTHQ) are compositionally biased toward low complexity. Mg(2+)-binding residues include Asp278 and Asp280. The PAP-associated domain occupies 455 to 522 (LRNFFAYFAK…VVQDPIQLNH (68 aa)).

It depends on Mg(2+) as a cofactor.

It is found in the cytoplasm. The catalysed reaction is RNA(n) + UTP = RNA(n)-3'-uridine ribonucleotide + diphosphate. In terms of biological role, uridylyltransferase which mediates terminal uridylation of miRNAs, leading to their degradation. Has high specificity for splicing-derived miRNAs (mirtrons) and other miRNA substrates containing a 3'-G terminal nucleotide. Appears to be a major suppressor of mirtron biogenesis. In Drosophila melanogaster (Fruit fly), this protein is Terminal uridylyltransferase Tailor.